The primary structure comprises 335 residues: Beta-ketoacyl-[acyl-carrier-protein] synthase III (335 aa).

Active-site residues include Cys-119 and His-261. An ACP-binding region spans residues 262–266 (QANQR). Residue Asn-291 is part of the active site.

It belongs to the thiolase-like superfamily. FabH family. Homodimer.

Its subcellular location is the cytoplasm. The enzyme catalyses malonyl-[ACP] + acetyl-CoA + H(+) = 3-oxobutanoyl-[ACP] + CO2 + CoA. It functions in the pathway lipid metabolism; fatty acid biosynthesis. Functionally, catalyzes the condensation reaction of fatty acid synthesis by the addition to an acyl acceptor of two carbons from malonyl-ACP. Catalyzes the first condensation reaction which initiates fatty acid synthesis and may therefore play a role in governing the total rate of fatty acid production. Possesses both acetoacetyl-ACP synthase and acetyl transacylase activities. Its substrate specificity determines the biosynthesis of branched-chain and/or straight-chain of fatty acids. This is Beta-ketoacyl-[acyl-carrier-protein] synthase III from Prochlorococcus marinus subsp. pastoris (strain CCMP1986 / NIES-2087 / MED4).